Here is a 348-residue protein sequence, read N- to C-terminus: NADH-ubiquinone oxidoreductase chain 2 (348 aa).

10 helical membrane-spanning segments follow: residues 3–23, 25–45, 59–79, 93–115, 149–169, 178–198, 201–221, 239–259, 276–296, and 326–346; these read PIIISMIGFTIILGTTIVLMS, HWFMIWIGFEMNMLAIIPVLM, YFLTQTTASMLMLLSVMINLI, TASTIMTLSLAMKLGLSPFHFWV, LNMTMLLTMSILSVVMGGWGG, ILAFSSIAHMGWMTAIIMFNP, TLLNLLLYILMTTTIFMILIF, IMTVIMLTILMSLGGLPPLSG, IALALIMAMSALLNLYFYMRL, and LPTLTIMSTLLLPLTPMMMML.

Belongs to the complex I subunit 2 family. As to quaternary structure, core subunit of respiratory chain NADH dehydrogenase (Complex I) which is composed of 45 different subunits. Interacts with TMEM242.

It is found in the mitochondrion inner membrane. It catalyses the reaction a ubiquinone + NADH + 5 H(+)(in) = a ubiquinol + NAD(+) + 4 H(+)(out). Functionally, core subunit of the mitochondrial membrane respiratory chain NADH dehydrogenase (Complex I) which catalyzes electron transfer from NADH through the respiratory chain, using ubiquinone as an electron acceptor. Essential for the catalytic activity and assembly of complex I. The protein is NADH-ubiquinone oxidoreductase chain 2 of Thyroptera tricolor (Spix's disk-winged bat).